The primary structure comprises 1132 residues: Cytospin-A (1132 aa).

A disordered region spans residues M1–K166. Low complexity-rich tracts occupy residues S73–S109 and S119–S129. Residues S150–S159 show a composition bias toward basic and acidic residues. Residues D226–Q268 adopt a coiled-coil conformation. The disordered stretch occupies residues A301–E381. The segment covering S333–D343 has biased composition (polar residues). Residues A348 to G377 are compositionally biased toward low complexity. Coiled-coil stretches lie at residues A385–L440 and R478–V798. Disordered regions lie at residues T869 to V895 and S939 to P1016. Over residues A875–T889 the composition is skewed to pro residues. Polar residues predominate over residues Q946–R961. Positions R962–S972 are enriched in basic and acidic residues. Low complexity predominate over residues A979 to S1000. In terms of domain architecture, Calponin-homology (CH) spans G1026–E1131.

It belongs to the cytospin-A family. May interact with both microtubules and actin cytoskeleton.

It localises to the cytoplasm. The protein resides in the cytoskeleton. Its subcellular location is the spindle. The protein localises to the cell junction. It is found in the gap junction. Involved in cytokinesis and spindle organization. May play a role in actin cytoskeleton organization and microtubule stabilization and hence required for proper cell adhesion and migration. The chain is Cytospin-A (specc1la) from Danio rerio (Zebrafish).